The following is a 150-amino-acid chain: Transcriptional repressor NrdR (150 aa).

A zinc finger lies at 3 to 34 (CPFCQHDHSKVIDSRVIDAGSAIRRRRECSKC). Residues 46–136 (LLVVKRNGVT…VYKSFDSADD (91 aa)) form the ATP-cone domain.

The protein belongs to the NrdR family. Zn(2+) is required as a cofactor.

In terms of biological role, negatively regulates transcription of bacterial ribonucleotide reductase nrd genes and operons by binding to NrdR-boxes. The polypeptide is Transcriptional repressor NrdR (Corynebacterium glutamicum (strain ATCC 13032 / DSM 20300 / JCM 1318 / BCRC 11384 / CCUG 27702 / LMG 3730 / NBRC 12168 / NCIMB 10025 / NRRL B-2784 / 534)).